Reading from the N-terminus, the 546-residue chain is Chaperonin GroEL 2 (546 aa).

Residues 29–32 (TLGP), 86–90 (DGTTT), G418, 482–484 (NAA), and D498 contribute to the ATP site.

This sequence belongs to the chaperonin (HSP60) family. Forms a cylinder of 14 subunits composed of two heptameric rings stacked back-to-back. Interacts with the co-chaperonin GroES.

It localises to the cytoplasm. It carries out the reaction ATP + H2O + a folded polypeptide = ADP + phosphate + an unfolded polypeptide.. Together with its co-chaperonin GroES, plays an essential role in assisting protein folding. The GroEL-GroES system forms a nano-cage that allows encapsulation of the non-native substrate proteins and provides a physical environment optimized to promote and accelerate protein folding. This chain is Chaperonin GroEL 2, found in Corynebacterium diphtheriae (strain ATCC 700971 / NCTC 13129 / Biotype gravis).